We begin with the raw amino-acid sequence, 280 residues long: Probable endonuclease 4 (280 aa).

Zn(2+)-binding residues include histidine 69, histidine 109, glutamate 145, aspartate 179, histidine 182, histidine 216, aspartate 229, histidine 231, and glutamate 261.

The protein belongs to the AP endonuclease 2 family. Zn(2+) serves as cofactor.

It carries out the reaction Endonucleolytic cleavage to 5'-phosphooligonucleotide end-products.. Endonuclease IV plays a role in DNA repair. It cleaves phosphodiester bonds at apurinic or apyrimidinic (AP) sites, generating a 3'-hydroxyl group and a 5'-terminal sugar phosphate. The protein is Probable endonuclease 4 of Aliarcobacter butzleri (strain RM4018) (Arcobacter butzleri).